Reading from the N-terminus, the 294-residue chain is 4-hydroxy-tetrahydrodipicolinate synthase (294 aa).

Residue Thr48 participates in pyruvate binding. Tyr136 (proton donor/acceptor) is an active-site residue. Lys164 functions as the Schiff-base intermediate with substrate in the catalytic mechanism. Val206 provides a ligand contact to pyruvate.

The protein belongs to the DapA family. In terms of assembly, homotetramer; dimer of dimers.

It localises to the cytoplasm. It catalyses the reaction L-aspartate 4-semialdehyde + pyruvate = (2S,4S)-4-hydroxy-2,3,4,5-tetrahydrodipicolinate + H2O + H(+). The protein operates within amino-acid biosynthesis; L-lysine biosynthesis via DAP pathway; (S)-tetrahydrodipicolinate from L-aspartate: step 3/4. Functionally, catalyzes the condensation of (S)-aspartate-beta-semialdehyde [(S)-ASA] and pyruvate to 4-hydroxy-tetrahydrodipicolinate (HTPA). This Desulforudis audaxviator (strain MP104C) protein is 4-hydroxy-tetrahydrodipicolinate synthase.